The primary structure comprises 284 residues: D-tagatose-1,6-bisphosphate aldolase subunit GatY (284 aa).

Catalysis depends on aspartate 82, which acts as the Proton donor. 2 residues coordinate Zn(2+): histidine 83 and histidine 180. Glycine 181 contributes to the dihydroxyacetone phosphate binding site. Histidine 208 contributes to the Zn(2+) binding site. Dihydroxyacetone phosphate is bound by residues 209–211 (GAS) and 230–233 (NVAT).

This sequence belongs to the class II fructose-bisphosphate aldolase family. TagBP aldolase GatY subfamily. As to quaternary structure, forms a complex with GatZ. It depends on Zn(2+) as a cofactor.

The enzyme catalyses D-tagatofuranose 1,6-bisphosphate = D-glyceraldehyde 3-phosphate + dihydroxyacetone phosphate. It functions in the pathway carbohydrate metabolism; D-tagatose 6-phosphate degradation; D-glyceraldehyde 3-phosphate and glycerone phosphate from D-tagatose 6-phosphate: step 2/2. Catalytic subunit of the tagatose-1,6-bisphosphate aldolase GatYZ, which catalyzes the reversible aldol condensation of dihydroxyacetone phosphate (DHAP or glycerone-phosphate) with glyceraldehyde 3-phosphate (G3P) to produce tagatose 1,6-bisphosphate (TBP). Requires GatZ subunit for full activity and stability. Is involved in the catabolism of galactitol. This chain is D-tagatose-1,6-bisphosphate aldolase subunit GatY, found in Escherichia coli (strain K12 / MC4100 / BW2952).